A 351-amino-acid polypeptide reads, in one-letter code: Peptidyl-Lys metalloendopeptidase (351 aa).

An N-terminal signal peptide occupies residues 1–22 (MFSLSSRFFLYSLCLSAVAVSA). Positions 23-183 (APGLSLSLSG…VARRSNLGKR (161 aa)) are excised as a propeptide. 2 disulfide bridges follow: C189–C259 and C261–C281. H301 serves as a coordination point for Zn(2+). E302 is a catalytic residue. 2 residues coordinate Zn(2+): H305 and D314.

Belongs to the peptidase M35 family. Zn(2+) serves as cofactor.

It localises to the secreted. The catalysed reaction is Preferential cleavage in proteins: -Xaa-|-Lys- (in which Xaa may be Pro).. Inhibited by chelating agents such as imidazole, alpha,alpha'-bipyridine, and 1,10-phenanthroline. The polypeptide is Peptidyl-Lys metalloendopeptidase (MEP) (Armillaria mellea (Honey mushroom)).